Here is a 321-residue protein sequence, read N- to C-terminus: Opticin (321 aa).

Residues methionine 1–threonine 19 form the signal peptide. Tyrosine 61 is subject to Sulfotyrosine. Positions leucine 105–glutamine 142 constitute an LRRNT domain. 6 LRR repeats span residues threonine 143–glycine 164, lysine 167–leucine 188, alanine 191–isoleucine 212, lysine 237–serine 258, leucine 259–aspartate 279, and proline 289–tyrosine 309. Cysteine 278 and cysteine 311 are joined by a disulfide. N-linked (GlcNAc...) asparagine glycosylation is present at asparagine 301.

The protein belongs to the small leucine-rich proteoglycan (SLRP) family. SLRP class III subfamily. As to quaternary structure, homodimer. Post-translationally, O-glycosylated (sialylated oligosaccharides). In terms of processing, sulfated on tyrosine residues. Proteolytically cleaved by MMP1, MMP2, MMP3, MMP7, MMP8, MMP9, ADAMTS4, and ADAMTS5. Proteolytically cleaved by MMP13.

The protein resides in the secreted. Its subcellular location is the extracellular space. It localises to the extracellular matrix. In terms of biological role, inhibits angiogenesis in the vitreous humor of the eye, and therefore represses neovascularization. Binds collagen fibrils. May be involved in collagen fiber organization via regulation of other members of the small leucine-rich repeat proteoglycan superfamily. This Bos taurus (Bovine) protein is Opticin (OPTC).